The sequence spans 367 residues: D-alanine--D-alanine ligase (367 aa).

The ATP-grasp domain maps to 141 to 346 (KNLFAQAGLR…YPELIERLIA (206 aa)). 174 to 229 (ERELGYPCFVKPANAGSSVGISKCKQRGDLKAAFIEAFQYDRKIIIEEAIVGREIE) is an ATP binding site. 3 residues coordinate Mg(2+): D300, E313, and N315.

Belongs to the D-alanine--D-alanine ligase family. Mg(2+) is required as a cofactor. Requires Mn(2+) as cofactor.

The protein localises to the cytoplasm. The enzyme catalyses 2 D-alanine + ATP = D-alanyl-D-alanine + ADP + phosphate + H(+). It participates in cell wall biogenesis; peptidoglycan biosynthesis. Cell wall formation. The sequence is that of D-alanine--D-alanine ligase from Geobacillus kaustophilus (strain HTA426).